We begin with the raw amino-acid sequence, 537 residues long: Tyrosine-protein phosphatase CDC14 homolog (537 aa).

The Tyrosine-protein phosphatase domain maps to 182 to 345; that stretch reads DFNWISPKFI…QVHFRAYFYE (164 aa). C286 serves as the catalytic Phosphocysteine intermediate. Residues 359 to 537 form a disordered region; the sequence is EPLATPPRHP…PKPSKSRLIS (179 aa). Residues 370-382 show a composition bias toward polar residues; sequence NATNGTSQSNIST. The span at 400–411 shows a compositional bias: low complexity; sequence PPSARRLPSASS. Residues 421–437 are compositionally biased toward polar residues; it reads ASKQSIQNENKASYSSY. A Phosphothreonine modification is found at T453. 2 positions are modified to phosphoserine: S468 and S470. Over residues 490–502 the composition is skewed to low complexity; the sequence is RRTSGNRWSSGSS. The residue at position 513 (S513) is a Phosphoserine. A compositionally biased stretch (polar residues) spans 514-523; it reads MSSLNNTSNG. A compositionally biased stretch (basic residues) spans 526–537; the sequence is AKPKPSKSRLIS.

Belongs to the protein-tyrosine phosphatase family. Non-receptor class CDC14 subfamily. As to quaternary structure, interacts with ark1 at the kinetochores. Interacts with bir1, cdc25, mid1, nbl1, pic1, and rad24. Phosphorylated by cds1, chk1, pmk1, and cdc2 upon Hydroxylurea and H(2)O(2) stress treatment. Phosphorylation regulates the nucleolar-to-nucleoplasmic transition. Is able to autodephosphorylate.

Its subcellular location is the nucleus. It localises to the nucleolus. It is found in the cytoplasm. The protein localises to the cytoskeleton. The protein resides in the microtubule organizing center. Its subcellular location is the spindle pole body. It carries out the reaction O-phospho-L-tyrosyl-[protein] + H2O = L-tyrosyl-[protein] + phosphate. Protein phosphatase which antagonizes mitotic cyclin-dependent kinase cdc2, the inactivation of which is essential for exit from mitosis. To access its substrates, is released from nucleolar sequestration during mitosis. Plays an essential in coordinating the nuclear division cycle with cytokinesis through the cytokinesis checkpoint. Involved in chromosome segregation, where it is required for meiosis I spindle dissambly as well as for establishing two consecutive chromosome segregation phases. Allows damaged actomyosin rings to be maintained to facilitate completion of cell division in response to minor perturbation of the cell division machinery. Dephosphorylates the mitotic inducer cdc25 for its rapid degradation. Down-regulation of cdc25 activity ensures a prompt inactivation of mitotic cdc2 complexes to trigger cell division. Also dephosphorylates cdc2-phosphorylated nsk1, allowing nsk1-binding to kinetochores and spindle. Dephosphorylates ase1, which is essential for spindle midzone assembly and for continuous extension of the anaphase spindle. Tethered to the contractile ring by mid1, where it dephosphorylates cdc15. In Schizosaccharomyces pombe (strain 972 / ATCC 24843) (Fission yeast), this protein is Tyrosine-protein phosphatase CDC14 homolog (clp1).